We begin with the raw amino-acid sequence, 284 residues long: 4-hydroxybenzoate octaprenyltransferase (284 aa).

Transmembrane regions (helical) follow at residues 19–39 (IGSL…AQGL), 42–62 (LRVL…GCVI), 93–113 (LLLF…MNTL), 114–134 (TIQL…MKRF), 136–156 (HLPQ…AWAA), 158–178 (ANTL…WTIA), 210–230 (IIGL…QGLA), 233–253 (TSYY…QHLI), and 264–284 (AFLN…LSVW).

Belongs to the UbiA prenyltransferase family. Mg(2+) serves as cofactor.

The protein resides in the cell inner membrane. The enzyme catalyses all-trans-octaprenyl diphosphate + 4-hydroxybenzoate = 4-hydroxy-3-(all-trans-octaprenyl)benzoate + diphosphate. It participates in cofactor biosynthesis; ubiquinone biosynthesis. In terms of biological role, catalyzes the prenylation of para-hydroxybenzoate (PHB) with an all-trans polyprenyl group. Mediates the second step in the final reaction sequence of ubiquinone-8 (UQ-8) biosynthesis, which is the condensation of the polyisoprenoid side chain with PHB, generating the first membrane-bound Q intermediate 3-octaprenyl-4-hydroxybenzoate. This is 4-hydroxybenzoate octaprenyltransferase from Vibrio cholerae serotype O1 (strain ATCC 39541 / Classical Ogawa 395 / O395).